A 107-amino-acid chain; its full sequence is Iron-binding protein IscA (107 aa).

Fe cation is bound by residues Cys35, Cys99, and Cys101.

Belongs to the HesB/IscA family. Homodimer; may form tetramers and higher multimers. Requires Fe cation as cofactor.

In terms of biological role, is able to transfer iron-sulfur clusters to apo-ferredoxin. Multiple cycles of [2Fe2S] cluster formation and transfer are observed, suggesting that IscA acts catalytically. Recruits intracellular free iron so as to provide iron for the assembly of transient iron-sulfur cluster in IscU in the presence of IscS, L-cysteine and the thioredoxin reductase system TrxA/TrxB. The polypeptide is Iron-binding protein IscA (Pectobacterium carotovorum subsp. carotovorum (strain PC1)).